Consider the following 793-residue polypeptide: Signal transducer and activator of transcription 5A (793 aa).

Residue Tyr-90 is modified to Phosphotyrosine. Position 128 is a phosphoserine (Ser-128). In terms of domain architecture, SH2 spans 589–686 (WNDGAILGFV…EVFAKYYTPV (98 aa)). Phosphotyrosine occurs at positions 682 and 694. Ser-779 is subject to Phosphoserine.

This sequence belongs to the transcription factor STAT family. In terms of assembly, forms a homodimer or a heterodimer with a related family member. Interacts with NCOA1 and SOCS7. Binds NR3C1. Interacts with ERBB4. Interacts with EBF4. Interacts with CD69. ISGylated. Post-translationally, tyrosine phosphorylated in response to KITLG/SCF, IL2, IL3, IL7, IL15, CSF2/GMCSF, GH1, PRL, EPO and THPO. Activated KIT promotes phosphorylation on tyrosine residues and subsequent translocation to the nucleus. Tyrosine phosphorylated in response to constitutively activated FGFR1, FGFR2, FGFR3 and FGFR4. Tyrosine phosphorylation is required for DNA-binding activity and dimerization. Serine phosphorylation is also required for maximal transcriptional activity. Tyrosine phosphorylated in response to signaling via activated FLT3; wild-type FLT3 results in much weaker phosphorylation than constitutively activated mutant FLT3. Alternatively, can be phosphorylated by JAK2 at Tyr-694. As to expression, in the virgin, found in most tissues except brain and muscle. During lactation, abundantly found in mammary tissue, as well as in other secretory organs such as salivary gland and seminal vesicle.

It is found in the cytoplasm. Its subcellular location is the nucleus. Functionally, carries out a dual function: signal transduction and activation of transcription. Mediates cellular responses to the cytokine KITLG/SCF and other growth factors. May mediate cellular responses to activated FGFR1, FGFR2, FGFR3 and FGFR4. Binds to the GAS element and activates PRL-induced transcription. Regulates the expression of milk proteins during lactation. This is Signal transducer and activator of transcription 5A (Stat5a) from Mus musculus (Mouse).